Here is a 414-residue protein sequence, read N- to C-terminus: Aspartic protease-like protein pynH (414 aa).

Residues 1-19 (MFPCSRIWSLLVAAATASA) form the signal peptide. The 368-residue stretch at 43–410 (FLTDIALGTP…DFEKLQVGIA (368 aa)) folds into the Peptidase A1 domain. N-linked (GlcNAc...) asparagine glycans are attached at residues Asn93, Asn102, Asn140, Asn151, Asn173, Asn202, Asn221, Asn258, Asn272, Asn335, and Asn366. Residues Cys333 and Cys371 are joined by a disulfide bond.

It belongs to the peptidase A1 family.

It functions in the pathway secondary metabolite biosynthesis. Aspartic protease-like protein; part of the gene cluster that mediates the biosynthesis of pyranonigrins, a family of antioxidative compounds. The first step of pyranonigrins biosynthesis is performed by the hybrid PKS-NRPS synthetase that condenses 6 malonyl-CoA units to an acetyl starter unit, to form a 1,3,5-trioxotetradecane-6,8-dienyl-ACP. The enoyl reductase (ER) domain of pynA is likely to be functional during the first two rounds of polyketide chain extension, to generate the saturated C-C bonds of the alkyl side chain. PynA subsequently forms the amide bond between the acyl chain and L-serine. Although pynA has a terminal reductase domain, it appears to require the thioesterase pynI for the release of the straight-chain intermediate from pynA via the formation of a tetramic acid pyranonigrin J. The methyltransferase pynC then coverts pyranonigrin J to pyranonigrin I via N-methylation. The FAD-dependent monooxygenase pynG catalyzes an epoxidation-mediated cyclization to form the dihydro-gamma-pyrone moiety, followed by pynD-catalyzed oxidation of the alcohol to the ketone and enolization to yield the characteristic tetramic acid-fused gamma-pyrone core of pyranonigrin H. Pyranonigrin H is substrate of pynH for dehydration-mediated exo-methylene formation from the serine side chain to produce pyranonigrin E, before the oxidase pynE reduces the exo-methylene of pyranonigrin E into a pendant methyl to form pyranonigrin G. The FAD-linked oxidoreductase pynB performs the reverse reaction and converts pyranonigrin G back to pyranonigrin E. The protein is Aspartic protease-like protein pynH of Aspergillus niger (strain ATCC MYA-4892 / CBS 513.88 / FGSC A1513).